A 418-amino-acid chain; its full sequence is Delta(14)-sterol reductase TM7SF2 (418 aa).

6 consecutive transmembrane segments (helical) span residues 13 to 35 (FGGP…HLLL), 62 to 81 (ALLL…LLPA), 102 to 124 (GFQA…LPLS), 129 to 148 (MLLP…SLLL), 255 to 277 (FGFM…QAQF), and 287 to 304 (WPLA…YYIF). Residues lysine 311, arginine 315, leucine 338, tryptophan 343, and 350-351 (NY) contribute to the NADP(+) site. A helical membrane pass occupies residues 355–377 (LIMALAWSLPCGVFHLLPYFYFL). NADP(+)-binding positions include aspartate 390, 394 to 398 (CRQKY), and tyrosine 405.

It belongs to the ERG4/ERG24 family. Highly expressed in liver and brain.

The protein resides in the microsome membrane. It is found in the endoplasmic reticulum membrane. It catalyses the reaction 4,4-dimethyl-5alpha-cholesta-8,24-dien-3beta-ol + NADP(+) = 4,4-dimethyl-5alpha-cholesta-8,14,24-trien-3beta-ol + NADPH + H(+). The enzyme catalyses 5alpha-cholest-8,14-dien-3beta-ol + NADPH + H(+) = 5alpha-cholest-8-en-3beta-ol + NADP(+). It carries out the reaction 4,4-dimethyl-8,14-cholestadien-3beta-ol + NADPH + H(+) = 4,4-dimethyl-5alpha-cholest-8-en-3beta-ol + NADP(+). It participates in steroid biosynthesis; cholesterol biosynthesis. In terms of biological role, catalyzes the reduction of the C14-unsaturated bond of lanosterol, as part of the metabolic pathway leading to cholesterol biosynthesis. The protein is Delta(14)-sterol reductase TM7SF2 (TM7SF2) of Bos taurus (Bovine).